The following is a 92-amino-acid chain: PqqA binding protein (92 aa).

The protein belongs to the PqqD family. Monomer. Interacts with PqqE.

It participates in cofactor biosynthesis; pyrroloquinoline quinone biosynthesis. Functionally, functions as a PqqA binding protein and presents PqqA to PqqE, in the pyrroloquinoline quinone (PQQ) biosynthetic pathway. The polypeptide is PqqA binding protein (Xanthomonas campestris pv. campestris (strain 8004)).